A 100-amino-acid polypeptide reads, in one-letter code: ESAT-6-like protein EsxT (100 aa).

This sequence belongs to the WXG100 family. ESAT-6 subfamily. In terms of assembly, forms a tight 1:1 complex with EsxU.

The protein localises to the secreted. This is ESAT-6-like protein EsxT from Mycobacterium tuberculosis (strain CDC 1551 / Oshkosh).